Reading from the N-terminus, the 230-residue chain is Cytidylate kinase (230 aa).

14–22 (GPSGVGKSS) contacts ATP.

Belongs to the cytidylate kinase family. Type 1 subfamily.

The protein resides in the cytoplasm. It carries out the reaction CMP + ATP = CDP + ADP. It catalyses the reaction dCMP + ATP = dCDP + ADP. This is Cytidylate kinase from Buchnera aphidicola subsp. Baizongia pistaciae (strain Bp).